The chain runs to 321 residues: Replication factor C small subunit (321 aa).

ATP is bound at residue 46 to 53; the sequence is GPAGVGKT.

The protein belongs to the activator 1 small subunits family. RfcS subfamily. In terms of assembly, heterohexamer composed of four small subunits (RfcS) and two large subunits (RfcL).

Its function is as follows. Part of the RFC clamp loader complex which loads the PCNA sliding clamp onto DNA. The complex possesses DNA-dependent ATPase activity which is further stimulated by PCNA. In conjunction with PCNA stimulates DNA synthesis by PolB, relieving inhibition by replication protein A (RPA). The polypeptide is Replication factor C small subunit (rfcS) (Methanothermobacter thermautotrophicus (strain ATCC 29096 / DSM 1053 / JCM 10044 / NBRC 100330 / Delta H) (Methanobacterium thermoautotrophicum)).